The following is a 187-amino-acid chain: GMP synthase [glutamine-hydrolyzing] subunit A (187 aa).

One can recognise a Glutamine amidotransferase type-1 domain in the interval 1–187; sequence MILIIDNHGQ…KNFAKLCGEL (187 aa). Catalysis depends on cysteine 76, which acts as the Nucleophile. Catalysis depends on residues histidine 164 and glutamate 166.

In terms of assembly, heterodimer composed of a glutamine amidotransferase subunit (A) and a GMP-binding subunit (B).

It catalyses the reaction XMP + L-glutamine + ATP + H2O = GMP + L-glutamate + AMP + diphosphate + 2 H(+). It functions in the pathway purine metabolism; GMP biosynthesis; GMP from XMP (L-Gln route): step 1/1. Its function is as follows. Catalyzes the synthesis of GMP from XMP. The protein is GMP synthase [glutamine-hydrolyzing] subunit A of Methanopyrus kandleri (strain AV19 / DSM 6324 / JCM 9639 / NBRC 100938).